A 596-amino-acid polypeptide reads, in one-letter code: Elongation factor 4 (596 aa).

One can recognise a tr-type G domain in the interval 2-183; sequence KNIRNFSIIA…EIIRRIPAPN (182 aa). GTP is bound by residues 14-19 and 130-133; these read DHGKST and NKID.

It belongs to the TRAFAC class translation factor GTPase superfamily. Classic translation factor GTPase family. LepA subfamily.

It localises to the cell inner membrane. The enzyme catalyses GTP + H2O = GDP + phosphate + H(+). In terms of biological role, required for accurate and efficient protein synthesis under certain stress conditions. May act as a fidelity factor of the translation reaction, by catalyzing a one-codon backward translocation of tRNAs on improperly translocated ribosomes. Back-translocation proceeds from a post-translocation (POST) complex to a pre-translocation (PRE) complex, thus giving elongation factor G a second chance to translocate the tRNAs correctly. Binds to ribosomes in a GTP-dependent manner. The sequence is that of Elongation factor 4 from Wolinella succinogenes (strain ATCC 29543 / DSM 1740 / CCUG 13145 / JCM 31913 / LMG 7466 / NCTC 11488 / FDC 602W) (Vibrio succinogenes).